Here is a 763-residue protein sequence, read N- to C-terminus: Phosphoglycerol transferase I (763 aa).

4 helical membrane-spanning segments follow: residues 1 to 21 (MSELLSVALFLASVLIYAWKA), 26 to 46 (WWFAATLTVLGLFVILNITLY), 77 to 97 (ILPGIGIALALVAVFGALGWV), and 108 to 128 (VGYSLLALLLALGSVDASPAF).

It belongs to the OpgB family.

It localises to the cell inner membrane. It catalyses the reaction a phosphatidylglycerol + a membrane-derived-oligosaccharide D-glucose = a 1,2-diacyl-sn-glycerol + a membrane-derived-oligosaccharide 6-(glycerophospho)-D-glucose.. Its pathway is glycan metabolism; osmoregulated periplasmic glucan (OPG) biosynthesis. Transfers a phosphoglycerol residue from phosphatidylglycerol to the membrane-bound nascent glucan backbones. This is Phosphoglycerol transferase I from Salmonella choleraesuis (strain SC-B67).